The chain runs to 352 residues: Protein RecA (352 aa).

65 to 72 (GPESSGKT) lines the ATP pocket.

This sequence belongs to the RecA family.

It localises to the cytoplasm. Its function is as follows. Can catalyze the hydrolysis of ATP in the presence of single-stranded DNA, the ATP-dependent uptake of single-stranded DNA by duplex DNA, and the ATP-dependent hybridization of homologous single-stranded DNAs. It interacts with LexA causing its activation and leading to its autocatalytic cleavage. The sequence is that of Protein RecA from Pseudomonas fluorescens (strain SBW25).